The sequence spans 214 residues: Metalloproteinase inhibitor 3 (214 aa).

The N-terminal stretch at 1-26 (MSVCALTLILGCFLLFLGDISKPAEG) is a signal peptide. C27 contributes to the Zn(2+) binding site. 2 involved in metalloproteinase-binding regions span residues 27 to 30 (CTCA) and 91 to 92 (ES). 6 cysteine pairs are disulfide-bonded: C27-C94, C29-C121, C39-C146, C148-C195, C153-C158, and C166-C187. Residues 27–146 (CTCAPSHPQD…GLNHRYPLGC (120 aa)) enclose the NTR domain.

This sequence belongs to the protease inhibitor I35 (TIMP) family.

It is found in the secreted. The protein localises to the extracellular space. The protein resides in the extracellular matrix. In terms of biological role, complexes with metalloproteinases (such as collagenases) and irreversibly inactivates them by binding to their catalytic zinc cofactor. May form part of a tissue-specific acute response to remodeling stimuli. The chain is Metalloproteinase inhibitor 3 (timp3) from Xenopus laevis (African clawed frog).